The primary structure comprises 216 residues: Probable glutamine ABC transporter permease protein GlnM (216 aa).

Residues phenylalanine 17 to valine 205 enclose the ABC transmembrane type-1 domain. A run of 5 helical transmembrane segments spans residues leucine 21–methionine 41, isoleucine 63–leucine 83, glycine 85–isoleucine 105, leucine 132–leucine 152, and leucine 181–leucine 201.

This sequence belongs to the binding-protein-dependent transport system permease family. The complex is composed of two ATP-binding proteins (GlnQ), two transmembrane proteins (GlnM and GlnP) and a solute-binding protein (GlnH).

The protein localises to the cell membrane. Functionally, part of the ABC transporter complex GlnHMPQ involved in glutamine transport. Probably responsible for the translocation of the substrate across the membrane. The chain is Probable glutamine ABC transporter permease protein GlnM (glnM) from Bacillus subtilis (strain 168).